The chain runs to 526 residues: 2-succinyl-5-enolpyruvyl-6-hydroxy-3-cyclohexene-1-carboxylate synthase (526 aa).

This sequence belongs to the TPP enzyme family. MenD subfamily. In terms of assembly, homodimer. Mg(2+) serves as cofactor. The cofactor is Mn(2+). It depends on thiamine diphosphate as a cofactor.

It catalyses the reaction isochorismate + 2-oxoglutarate + H(+) = 5-enolpyruvoyl-6-hydroxy-2-succinyl-cyclohex-3-ene-1-carboxylate + CO2. It participates in quinol/quinone metabolism; 1,4-dihydroxy-2-naphthoate biosynthesis; 1,4-dihydroxy-2-naphthoate from chorismate: step 2/7. Its pathway is quinol/quinone metabolism; menaquinone biosynthesis. Its function is as follows. Catalyzes the thiamine diphosphate-dependent decarboxylation of 2-oxoglutarate and the subsequent addition of the resulting succinic semialdehyde-thiamine pyrophosphate anion to isochorismate to yield 2-succinyl-5-enolpyruvyl-6-hydroxy-3-cyclohexene-1-carboxylate (SEPHCHC). This Bdellovibrio bacteriovorus (strain ATCC 15356 / DSM 50701 / NCIMB 9529 / HD100) protein is 2-succinyl-5-enolpyruvyl-6-hydroxy-3-cyclohexene-1-carboxylate synthase.